The primary structure comprises 200 residues: Glycerol-3-phosphate acyltransferase (200 aa).

5 helical membrane-spanning segments follow: residues 1–21 (MLLS…MPNG), 53–73 (GPAL…VLLA), 81–101 (WVQV…VWLG), 114–134 (MFLG…MAVI), and 139–159 (IVSL…LTSG).

It belongs to the PlsY family. As to quaternary structure, probably interacts with PlsX.

Its subcellular location is the cell inner membrane. It catalyses the reaction an acyl phosphate + sn-glycerol 3-phosphate = a 1-acyl-sn-glycero-3-phosphate + phosphate. It functions in the pathway lipid metabolism; phospholipid metabolism. In terms of biological role, catalyzes the transfer of an acyl group from acyl-phosphate (acyl-PO(4)) to glycerol-3-phosphate (G3P) to form lysophosphatidic acid (LPA). This enzyme utilizes acyl-phosphate as fatty acyl donor, but not acyl-CoA or acyl-ACP. This chain is Glycerol-3-phosphate acyltransferase, found in Synechococcus sp. (strain CC9902).